The sequence spans 530 residues: Chaperonin GroEL 2 (530 aa).

ATP is bound by residues 30–33, lysine 51, 87–91, glycine 415, 479–481, and aspartate 495; these read TLGP, DGTTT, and NAA.

This sequence belongs to the chaperonin (HSP60) family. As to quaternary structure, forms a cylinder of 14 subunits composed of two heptameric rings stacked back-to-back. Interacts with the co-chaperonin GroES.

The protein resides in the cytoplasm. It catalyses the reaction ATP + H2O + a folded polypeptide = ADP + phosphate + an unfolded polypeptide.. Its function is as follows. Together with its co-chaperonin GroES, plays an essential role in assisting protein folding. The GroEL-GroES system forms a nano-cage that allows encapsulation of the non-native substrate proteins and provides a physical environment optimized to promote and accelerate protein folding. The chain is Chaperonin GroEL 2 from Vibrio cholerae serotype O1 (strain ATCC 39315 / El Tor Inaba N16961).